The sequence spans 237 residues: 4-hydroxy-tetrahydrodipicolinate reductase (237 aa).

NAD(+)-binding positions include 11–16 (GASGRM), 92–94 (GTT), and 116–119 (GSNF). The active-site Proton donor/acceptor is His-148. His-149 provides a ligand contact to (S)-2,3,4,5-tetrahydrodipicolinate. Lys-152 serves as the catalytic Proton donor. 158-159 (GS) serves as a coordination point for (S)-2,3,4,5-tetrahydrodipicolinate.

The protein belongs to the DapB family.

It localises to the cytoplasm. It catalyses the reaction (S)-2,3,4,5-tetrahydrodipicolinate + NAD(+) + H2O = (2S,4S)-4-hydroxy-2,3,4,5-tetrahydrodipicolinate + NADH + H(+). The catalysed reaction is (S)-2,3,4,5-tetrahydrodipicolinate + NADP(+) + H2O = (2S,4S)-4-hydroxy-2,3,4,5-tetrahydrodipicolinate + NADPH + H(+). It participates in amino-acid biosynthesis; L-lysine biosynthesis via DAP pathway; (S)-tetrahydrodipicolinate from L-aspartate: step 4/4. In terms of biological role, catalyzes the conversion of 4-hydroxy-tetrahydrodipicolinate (HTPA) to tetrahydrodipicolinate. In Xylella fastidiosa (strain M12), this protein is 4-hydroxy-tetrahydrodipicolinate reductase.